We begin with the raw amino-acid sequence, 143 residues long: Nucleoside diphosphate kinase (143 aa).

K11, F59, R87, T93, R104, and N114 together coordinate ATP. H117 (pros-phosphohistidine intermediate) is an active-site residue.

This sequence belongs to the NDK family. In terms of assembly, homotetramer. Mg(2+) serves as cofactor.

It localises to the cytoplasm. The enzyme catalyses a 2'-deoxyribonucleoside 5'-diphosphate + ATP = a 2'-deoxyribonucleoside 5'-triphosphate + ADP. It carries out the reaction a ribonucleoside 5'-diphosphate + ATP = a ribonucleoside 5'-triphosphate + ADP. Functionally, major role in the synthesis of nucleoside triphosphates other than ATP. The ATP gamma phosphate is transferred to the NDP beta phosphate via a ping-pong mechanism, using a phosphorylated active-site intermediate. The protein is Nucleoside diphosphate kinase of Pseudoalteromonas atlantica (strain T6c / ATCC BAA-1087).